The primary structure comprises 1339 residues: DNA-directed RNA polymerase subunit beta'' (1339 aa).

Zn(2+)-binding residues include C226, C299, C306, and C309.

Belongs to the RNA polymerase beta' chain family. RpoC2 subfamily. As to quaternary structure, in plastids the minimal PEP RNA polymerase catalytic core is composed of four subunits: alpha, beta, beta', and beta''. When a (nuclear-encoded) sigma factor is associated with the core the holoenzyme is formed, which can initiate transcription. Zn(2+) is required as a cofactor.

Its subcellular location is the plastid. It localises to the chloroplast. The enzyme catalyses RNA(n) + a ribonucleoside 5'-triphosphate = RNA(n+1) + diphosphate. In terms of biological role, DNA-dependent RNA polymerase catalyzes the transcription of DNA into RNA using the four ribonucleoside triphosphates as substrates. This Cycas taitungensis (Prince sago) protein is DNA-directed RNA polymerase subunit beta''.